Consider the following 465-residue polypeptide: Argininosuccinate lyase (465 aa).

Belongs to the lyase 1 family. Argininosuccinate lyase subfamily.

The protein localises to the cytoplasm. It catalyses the reaction 2-(N(omega)-L-arginino)succinate = fumarate + L-arginine. It functions in the pathway amino-acid biosynthesis; L-arginine biosynthesis; L-arginine from L-ornithine and carbamoyl phosphate: step 3/3. The polypeptide is Argininosuccinate lyase (Methylococcus capsulatus (strain ATCC 33009 / NCIMB 11132 / Bath)).